The primary structure comprises 711 residues: Polyribonucleotide nucleotidyltransferase (711 aa).

2 residues coordinate Mg(2+): aspartate 486 and aspartate 492. The KH domain occupies 553–612 (PRIHTIKINPDKIKDVIGKGGSVIRALTEETGTTIEIEDDGTVKIAATDGEKAKHAIRRI). In terms of domain architecture, S1 motif spans 622–690 (GRVYNGKVTR…RQGRIRLSIK (69 aa)). Residues 690–711 (KEATEQSQPAAALEAPAAEQGE) are disordered. Residues 698-711 (PAAALEAPAAEQGE) show a composition bias toward low complexity.

Belongs to the polyribonucleotide nucleotidyltransferase family. Component of the RNA degradosome, which is a multiprotein complex involved in RNA processing and mRNA degradation. Requires Mg(2+) as cofactor.

Its subcellular location is the cytoplasm. It catalyses the reaction RNA(n+1) + phosphate = RNA(n) + a ribonucleoside 5'-diphosphate. Involved in mRNA degradation. Catalyzes the phosphorolysis of single-stranded polyribonucleotides processively in the 3'- to 5'-direction. The polypeptide is Polyribonucleotide nucleotidyltransferase (Escherichia coli O127:H6 (strain E2348/69 / EPEC)).